The primary structure comprises 328 residues: Gonadotropin-releasing hormone receptor (328 aa).

Over 1–38 (MANSASPEQNQNHCSAINSSILLTQGNLPTLTLSGKIR) the chain is Extracellular. Asparagine 18 is a glycosylation site (N-linked (GlcNAc...) asparagine). Residues 39 to 58 (VTVTFFLFLLSTAFNASFLL) traverse the membrane as a helical segment. At 59–77 (KLQKWTQRKEKGKKLSRMK) the chain is on the cytoplasmic side. The chain crosses the membrane as a helical span at residues 78 to 97 (VLLKHLTLANLLETLIVMPL). The Extracellular segment spans residues 98-115 (DGMWNITVQWYAGEFLCK). N-linked (GlcNAc...) asparagine glycosylation occurs at asparagine 102. Cysteine 114 and cysteine 196 are oxidised to a cystine. A helical transmembrane segment spans residues 116 to 137 (VLSYLKLFSMYAPAFMMVVISL). The Cytoplasmic segment spans residues 138-164 (DRSLAITRPLAVKSNSRLGRFMIGLAW). The chain crosses the membrane as a helical span at residues 165 to 184 (LLSSIFAGPQLYIFRMIHLA). Topologically, residues 185–212 (DSSGQTEGFSQCVTHGSFPQWWHQAFYN) are extracellular. A helical transmembrane segment spans residues 213 to 232 (FFTFSCLFIIPLLIMLICNA). Residues 233–281 (KIMFTLTRVLQQDPHNLQLNQSKNNIPRARLRTLKMTVAFAASFIVCWT) lie on the Cytoplasmic side of the membrane. The helical transmembrane segment at 282–300 (PYYVLGIWYWFDPEMVNRV) threads the bilayer. The Extracellular segment spans residues 301 to 306 (SDPVNH). A helical transmembrane segment spans residues 307–326 (FFFLFAFLNPCFDPLIYGYF). The Cytoplasmic portion of the chain corresponds to 327–328 (SL).

The protein belongs to the G-protein coupled receptor 1 family. Pituitary gland.

The protein resides in the cell membrane. In terms of biological role, receptor for gonadotropin releasing hormone (GnRH) that mediates the action of GnRH to stimulate the secretion of the gonadotropic hormones luteinizing hormone (LH) and follicle-stimulating hormone (FSH). This receptor mediates its action by association with G-proteins that activate a phosphatidylinositol-calcium second messenger system. The sequence is that of Gonadotropin-releasing hormone receptor (GNRHR) from Sus scrofa (Pig).